A 352-amino-acid chain; its full sequence is Neuronal growth regulator 1 (352 aa).

A signal peptide spans 1 to 35 (MVPLVRGAGGSHQWLAAVLLGLCCLLPAGRLAAPG). Ig-like C2-type domains lie at 36 to 132 (GDFP…VHLT), 137 to 219 (PKIF…KVTV), and 223 to 311 (PTIQ…LPLN). Cysteine 58 and cysteine 116 are oxidised to a cystine. N-linked (GlcNAc...) asparagine glycosylation is found at asparagine 71 and asparagine 153. 2 cysteine pairs are disulfide-bonded: cysteine 158-cysteine 201 and cysteine 243-cysteine 295. Residues asparagine 273, asparagine 284, asparagine 292, and asparagine 305 are each glycosylated (N-linked (GlcNAc...) asparagine). The GPI-anchor amidated glycine moiety is linked to residue glycine 322. A propeptide spans 323 to 352 (DAEVLFSCWYLVLTLSSLTSIFYLKNIILH) (removed in mature form).

This sequence belongs to the immunoglobulin superfamily. IgLON family. As to quaternary structure, interacts with CEPU-1 and LAMP. Glycosylated. As to expression, expressed in embryonic retina, telencephalon, tectum, cerebellum and diencephalon (at protein level).

The protein localises to the cell membrane. May be involved in cell-adhesion. May participate in the regulation of neurite outgrowth in the developing brain. The chain is Neuronal growth regulator 1 (NEGR1) from Gallus gallus (Chicken).